The primary structure comprises 491 residues: uncharacterized protein (491 aa).

This is an uncharacterized protein from Schizosaccharomyces pombe (strain 972 / ATCC 24843) (Fission yeast).